Consider the following 461-residue polypeptide: Regulatory protein AtoC (461 aa).

The Response regulatory domain occupies 6–120; sequence RILIVDDEDN…ELNLIVQRAL (115 aa). Position 55 is a 4-aspartylphosphate (Asp55). A Phosphohistidine modification is found at His73. A Sigma-54 factor interaction domain is found at 145–374; the sequence is ILTNSPAMMD…LSNVIERAVV (230 aa). ATP contacts are provided by residues 173–180 and 236–245; these read GESGTGKE and ANEGTLLLDE. The H-T-H motif DNA-binding region spans 433–452; that stretch reads RTRTALMLGISRRALMYKLQ.

In terms of processing, phosphorylated by AtoS. Contains two phosphorylation sites, which are both involved in the transduction of the acetoacetate signal. Asp-55 is probably the primary phosphorylation site, but either both residues can be phosphorylated independently by AtoS or the phosphate group can be transferred between them. The N-terminus is blocked.

The protein resides in the cytoplasm. Its function is as follows. Member of the two-component regulatory system AtoS/AtoC. In the presence of acetoacetate, AtoS/AtoC stimulates the expression of the atoDAEB operon, leading to short chain fatty acid catabolism and activation of the poly-(R)-3-hydroxybutyrate (cPHB) biosynthetic pathway. Also induces the operon in response to spermidine. Involved in the regulation of motility and chemotaxis, via transcriptional induction of the flagellar regulon. AtoC acts by binding directly to the promoter region of the target genes. In addition to its role as a transcriptional regulator, functions as a post-translational regulator that inhibits polyamine biosynthesis via regulation of ornithine decarboxylase (ODC). This Escherichia coli (strain K12) protein is Regulatory protein AtoC (atoC).